Consider the following 177-residue polypeptide: Large ribosomal subunit protein uL6 (177 aa).

The protein belongs to the universal ribosomal protein uL6 family. In terms of assembly, part of the 50S ribosomal subunit.

In terms of biological role, this protein binds to the 23S rRNA, and is important in its secondary structure. It is located near the subunit interface in the base of the L7/L12 stalk, and near the tRNA binding site of the peptidyltransferase center. The polypeptide is Large ribosomal subunit protein uL6 (Rickettsia canadensis (strain McKiel)).